Reading from the N-terminus, the 310-residue chain is Acetyl-coenzyme A carboxylase carboxyl transferase subunit alpha (310 aa).

A CoA carboxyltransferase C-terminal domain is found at 36 to 286 (NLEKEITKTY…GEYILKQLDE (251 aa)).

The protein belongs to the AccA family. As to quaternary structure, acetyl-CoA carboxylase is a heterohexamer composed of biotin carboxyl carrier protein (AccB), biotin carboxylase (AccC) and two subunits each of ACCase subunit alpha (AccA) and ACCase subunit beta (AccD).

Its subcellular location is the cytoplasm. It carries out the reaction N(6)-carboxybiotinyl-L-lysyl-[protein] + acetyl-CoA = N(6)-biotinyl-L-lysyl-[protein] + malonyl-CoA. The protein operates within lipid metabolism; malonyl-CoA biosynthesis; malonyl-CoA from acetyl-CoA: step 1/1. Its function is as follows. Component of the acetyl coenzyme A carboxylase (ACC) complex. First, biotin carboxylase catalyzes the carboxylation of biotin on its carrier protein (BCCP) and then the CO(2) group is transferred by the carboxyltransferase to acetyl-CoA to form malonyl-CoA. This is Acetyl-coenzyme A carboxylase carboxyl transferase subunit alpha from Campylobacter fetus subsp. fetus (strain 82-40).